Consider the following 79-residue polypeptide: Short neurotoxin 6 (79 aa).

A signal peptide spans 1-21 (MKTLLLTLVMVTIMCLDLGYT). 4 cysteine pairs are disulfide-bonded: Cys-24–Cys-41, Cys-34–Cys-59, Cys-63–Cys-71, and Cys-72–Cys-77.

This sequence belongs to the three-finger toxin family. Short-chain subfamily. Type III alpha-neurotoxin sub-subfamily. Expressed by the venom gland.

It is found in the secreted. Binds with high affinity to muscle nicotinic acetylcholine receptor (nAChR) and hinders acetylcholine binding to the receptor, thereby impairing neuromuscular transmission. Competes with the binding of alpha-bungarotoxin on muscle AChR (from Torpedo) with an IC(50) of 0.18 uM. Causes muscle paralysis, spasms and increased respiration. The sequence is that of Short neurotoxin 6 from Pseudonaja textilis (Eastern brown snake).